Reading from the N-terminus, the 202-residue chain is Histone chaperone ASF1B (202 aa).

The segment at Met-1–Asn-156 is interaction with histone H3 and CHAF1B. At Ser-198 the chain carries Phosphoserine; by TLK2.

Belongs to the ASF1 family. As to quaternary structure, interacts with histone H3 (via C-terminus), including histone H3.1, H3.2 and H3.3, and histone H4; the interaction with H3 is direct. Interacts with the CHAF1A, CHAF1B and RBBP4 subunits of the CAF-1 complex. Interacts with HAT1, NASP and TAF1. Found in a soluble complex with NASP and histones H3 and H4; the interaction with NASP is probably indirect and mediated by H3-H4. Interacts with CDAN1. Found in a cytosolic complex with CDAN1, ASF1A, IPO4 and histones H3.1 and H4. Interacts with CREBBP. Post-translationally, phosphorylated by TLK2. Phosphorylated by TLK1. As to expression, highly expressed in germ cells. Restricted to premeiotic to meiotic stages during spermatogenesis.

It is found in the nucleus. Its subcellular location is the cytoplasm. The protein localises to the cytosol. In terms of biological role, histone chaperone that facilitates histone deposition and histone exchange and removal during nucleosome assembly and disassembly. Cooperates with chromatin assembly factor 1 (CAF-1) to promote replication-dependent chromatin assembly. Also involved in the nuclear import of the histone H3-H4 dimer together with importin-4 (IPO4): specifically recognizes and binds newly synthesized histones with the monomethylation of H3 'Lys-9' (H3K9me1) and diacetylation at 'Lys-5' and 'Lys-12' of H4 (H4K5ac and H4K12ac) marks in the cytosol. Does not participate in replication-independent nucleosome deposition which is mediated by ASF1A and HIRA. Required for gonad development. In Mus musculus (Mouse), this protein is Histone chaperone ASF1B.